We begin with the raw amino-acid sequence, 350 residues long: Selenide, water dikinase (350 aa).

Residue Cys17 is part of the active site. ATP-binding positions include Lys20 and 48–50 (LFD). A Mg(2+)-binding site is contributed by Asp51. Residues Asp68, Asp91, and 139 to 141 (GHS) each bind ATP. Position 91 (Asp91) interacts with Mg(2+). Asp229 lines the Mg(2+) pocket.

This sequence belongs to the selenophosphate synthase 1 family. Class I subfamily. As to quaternary structure, homodimer. Mg(2+) serves as cofactor.

The enzyme catalyses hydrogenselenide + ATP + H2O = selenophosphate + AMP + phosphate + 2 H(+). Synthesizes selenophosphate from selenide and ATP. The sequence is that of Selenide, water dikinase from Bdellovibrio bacteriovorus (strain ATCC 15356 / DSM 50701 / NCIMB 9529 / HD100).